The following is a 447-amino-acid chain: Tubulin beta-1 chain (447 aa).

Gln11 provides a ligand contact to GTP. Position 40 is a phosphoserine (Ser40). GTP is bound by residues Glu69, Ser138, Gly142, Thr143, Gly144, Asn204, and Asn226. Glu69 contributes to the Mg(2+) binding site. Phosphoserine is present on Ser339. The tract at residues 427 to 447 (EATADEDAEFEEEQEAEVDEN) is disordered. The span at 429-447 (TADEDAEFEEEQEAEVDEN) shows a compositional bias: acidic residues.

The protein belongs to the tubulin family. As to quaternary structure, dimer of alpha and beta chains. A typical microtubule is a hollow water-filled tube with an outer diameter of 25 nm and an inner diameter of 15 nM. Alpha-beta heterodimers associate head-to-tail to form protofilaments running lengthwise along the microtubule wall with the beta-tubulin subunit facing the microtubule plus end conferring a structural polarity. Microtubules usually have 13 protofilaments but different protofilament numbers can be found in some organisms and specialized cells. Interacts with mgr and Vhl. Requires Mg(2+) as cofactor.

Its subcellular location is the cytoplasm. The protein localises to the cytoskeleton. Functionally, tubulin is the major constituent of microtubules, a cylinder consisting of laterally associated linear protofilaments composed of alpha- and beta-tubulin heterodimers. Microtubules grow by the addition of GTP-tubulin dimers to the microtubule end, where a stabilizing cap forms. Below the cap, tubulin dimers are in GDP-bound state, owing to GTPase activity of alpha-tubulin. This is Tubulin beta-1 chain (betaTub56D) from Drosophila melanogaster (Fruit fly).